A 183-amino-acid polypeptide reads, in one-letter code: Capsid protein (183 aa).

Positions 136–183 (NAPILSTLPETTVVRQRGRAPRRRTPSPRRRRSQSPRRRRSQSPASQC) are disordered. The segment covering 151–176 (QRGRAPRRRTPSPRRRRSQSPRRRRS) has biased composition (basic residues). One copy of the 1; half-length repeat lies at 155–161 (APRRRTP). Residues 155 to 177 (APRRRTPSPRRRRSQSPRRRRSQ) form a 3 X 8 AA repeats of S-P-R-R-R-[PR]-S-Q region. Residues 158–175 (RRTPSPRRRRSQSPRRRR) carry the Bipartite nuclear localization signal motif. A phosphoserine; by host mark is found at serine 162 and serine 170. 2 repeat units span residues 162–169 (SPRRRRSQ) and 170–177 (SPRRRRSQ). An RNA binding region spans residues 177-183 (QSPASQC).

This sequence belongs to the orthohepadnavirus core antigen family. As to quaternary structure, homodimerizes, then multimerizes. Interacts with cytosol exposed regions of viral L glycoprotein present in the reticulum-to-Golgi compartment. Interacts with human FLNB. Phosphorylated form interacts with host importin alpha; this interaction depends on the exposure of the NLS, which itself depends upon genome maturation and/or phosphorylation of the capsid protein. Interacts with host NUP153. Phosphorylated by host SRPK1, SRPK2, and maybe protein kinase C or GAPDH. Phosphorylation is critical for pregenomic RNA packaging. Protein kinase C phosphorylation is stimulated by HBx protein and may play a role in transport of the viral genome to the nucleus at the late step during the viral replication cycle.

The protein resides in the virion. Its subcellular location is the host cytoplasm. Its function is as follows. Self assembles to form an icosahedral capsid. Most capsids appear to be large particles with an icosahedral symmetry of T=4 and consist of 240 copies of capsid protein, though a fraction forms smaller T=3 particles consisting of 180 capsid proteins. Entering capsids are transported along microtubules to the nucleus. Phosphorylation of the capsid is thought to induce exposure of nuclear localization signal in the C-terminal portion of the capsid protein that allows binding to the nuclear pore complex via the importin (karyopherin-) alpha and beta. Capsids are imported in intact form through the nuclear pore into the nuclear basket, where it probably binds NUP153. Only capsids that contain the mature viral genome can release the viral DNA and capsid protein into the nucleoplasm. Immature capsids get stuck in the basket. Capsids encapsulate the pre-genomic RNA and the P protein. Pre-genomic RNA is reverse-transcribed into DNA while the capsid is still in the cytoplasm. The capsid can then either be directed to the nucleus, providing more genomes for transcription, or bud through the endoplasmic reticulum to provide new virions. This chain is Capsid protein, found in Homo sapiens (Human).